The chain runs to 687 residues: Adhesion G-protein coupled receptor G1 (687 aa).

The first 25 residues, 1 to 25, serve as a signal peptide directing secretion; it reads MTAQSLLQTTLFLLSLLFLVQGAHG. Position 26-33 (26-33) interacts with heparin; sequence RGHREDFR. At 26–402 the chain is on the extracellular side; sequence RGHREDFRFC…VEVDAVHKHY (377 aa). 2 disulfides stabilise this stretch: cysteine 35–cysteine 91 and cysteine 121–cysteine 177. 3 N-linked (GlcNAc...) asparagine glycosylation sites follow: asparagine 39, asparagine 148, and asparagine 171. 190-200 is a binding site for heparin; it reads LKHPQKASRRP. The GAIN-B domain occupies 224-395; that stretch reads DTVSFEEDRI…AVLMVSSVEV (172 aa). N-linked (GlcNAc...) asparagine glycosylation is found at asparagine 234, asparagine 303, asparagine 324, and asparagine 341. 2 disulfides stabilise this stretch: cysteine 346/cysteine 377 and cysteine 366/cysteine 379. Residues 346–395 are GPS; that stretch reads CVFWVEDPTLSSPGHWSSAGCETVRRETQTSCFCNHLTYFAVLMVSSVEV. A stachel region spans residues 384–397; the sequence is YFAVLMVSSVEVDA. A helical transmembrane segment spans residues 403 to 423; sequence LSLLSYVGCVVSALACIVTIA. Over 424–442 the chain is Cytoplasmic; that stretch reads AYLCSRRKPRDYTIKVHMN. Residues 443–463 traverse the membrane as a helical segment; it reads LLLAVFLLDTSFLLSEPVALT. The Extracellular portion of the chain corresponds to 464–470; the sequence is GSEAGCR. The helical transmembrane segment at 471-491 threads the bilayer; the sequence is ASAIFLHFSLLACLSWMGLEG. At 492 to 512 the chain is on the cytoplasmic side; sequence YNLYRLVVEVFGTYVPGYLLK. Residues 513–533 traverse the membrane as a helical segment; it reads LSAMGWGFPIFLVTLVALVDV. At 534–570 the chain is on the extracellular side; the sequence is DNYGPIILAVHRTPEGVIYPSMCWIRDSLVSYITNLG. Residues 571–591 form a helical membrane-spanning segment; sequence LFSLVFLFNMAMLATMVVQIL. At 592–603 the chain is on the cytoplasmic side; the sequence is RLRPHTQKWSHV. A helical membrane pass occupies residues 604–624; that stretch reads LTLLGLSLVLGLPWALIFFSF. At 625 to 630 the chain is on the extracellular side; that stretch reads ASGTFQ. A helical transmembrane segment spans residues 631–651; sequence LVVLYLFSIITSFQGFLIFIW. Residues 652–687 are Cytoplasmic-facing; the sequence is YWSMRLQARGGPSPLKSNSDSARLPISSGSTSSSRI. Positions 664-687 are disordered; the sequence is SPLKSNSDSARLPISSGSTSSSRI. The span at 678–687 shows a compositional bias: low complexity; sequence SSGSTSSSRI.

The protein belongs to the G-protein coupled receptor 2 family. LN-TM7 subfamily. In terms of assembly, heterodimer of 2 chains generated by proteolytic processing; the large extracellular N-terminal fragment (ADGRG1 NT) and the membrane-bound C-terminal fragment (ADGRG1-CT) predominantly remain associated and non-covalently linked. ADGRG1 NT self-associates in a trans-trans manner; the homophilic interaction enhances receptor signaling. Interacts with TGM2. Interacts with heparin; leading to the reduction of ADGRG1 shedding. Interacts with COL3A1. Part of a GPCR-tetraspanin complex at least consisting of ADGRG1, CD81, eventually CD9, and GNA11 in which CD81 is enhancing the association of ADGRG1 with GNA11. Autoproteolytically cleaved into 2 fragments; the large extracellular N-terminal fragment (ADGRG1 NT) and the membrane-bound C-terminal fragment (ADGRG1 CT) predominantly remain associated and non-covalently linked. Shedding to yield the secreted ADGRG1 N-terminal fragment seems to involve metalloprotease(s). In terms of processing, ubiquitinated. Undergoes polyubiquitination upon activation.

It localises to the cell membrane. It is found in the secreted. The protein localises to the membrane raft. With respect to regulation, forms a heterodimer of 2 chains generated by proteolytic processing that remain associated through non-covalent interactions mediated by the GAIN-B domain. In the inactivated receptor, the Stachel sequence (also named stalk) is embedded in the GAIN-B domain, where it adopts a beta-strand conformation. On activation, the Stachel moves into the 7 transmembrane region and adopts a twisted hook-shaped configuration that forms contacts within the receptor, leading to coupling of a G-alpha protein, which activates signaling. The cleaved GAIN-B and N-terminal domains can then dissociate from the rest of the receptor. Adhesion G-protein coupled receptor (aGPCR) for steroid hormone 17alpha-hydroxypregnenolone (17-OH), which is involved in cell adhesion and cell-cell interactions. Ligand binding causes a conformation change that triggers signaling via guanine nucleotide-binding proteins (G proteins) and modulates the activity of downstream effectors, such as RhoA pathway. ADGRG1 is coupled to G(12) and/or G(13) G proteins (GNA12 and GNA13, respectively) and mediates the activation Rho small GTPases. Acts as a potent suppressor of ferroptosis: binding to 17-OH-binding initiates signaling that down-regulates CD36 and alleviates ferroptosis-induced liver injury. Ligand-binding also induces cell adhesion activity via association with proteins such as collagen III/COL3A1 and TGM2. Mediates cell matrix adhesion in developing neurons and hematopoietic stem cells. Involved in cortical development, specifically in maintenance of the pial basement membrane integrity and in cortical lamination: association with COL3A1 in the developing brain inhibits neuronal migration via activation of the RhoA pathway. Together with TGM2, acts as a regulator of myelination and myelin repair in oligodendrocyte precursor cells. Acts as a hemostatic sensor of shear force: G protein-coupled receptor signaling is activated in response to shear force in platelets, promoting G(13) G protein signaling, and platelet shape change and aggregation in a COL3A1-dependent manner. Acts as an inhibitor of VEGFA production thereby inhibiting angiogenesis through a signaling pathway mediated by PRKCA. Plays a role in the maintenance of hematopoietic stem cells in bone marrow niche. Plays an essential role in testis development. The chain is Adhesion G-protein coupled receptor G1 (ADGRG1) from Gorilla gorilla gorilla (Western lowland gorilla).